The sequence spans 154 residues: Ribosome maturation factor RimP (154 aa).

The protein belongs to the RimP family.

It is found in the cytoplasm. Its function is as follows. Required for maturation of 30S ribosomal subunits. The chain is Ribosome maturation factor RimP from Clostridium perfringens (strain SM101 / Type A).